We begin with the raw amino-acid sequence, 232 residues long: Large ribosomal subunit protein uL1 (232 aa).

This sequence belongs to the universal ribosomal protein uL1 family. Part of the 50S ribosomal subunit.

Functionally, binds directly to 23S rRNA. The L1 stalk is quite mobile in the ribosome, and is involved in E site tRNA release. Its function is as follows. Protein L1 is also a translational repressor protein, it controls the translation of the L11 operon by binding to its mRNA. The polypeptide is Large ribosomal subunit protein uL1 (Amoebophilus asiaticus (strain 5a2)).